The sequence spans 334 residues: Ornithine carbamoyltransferase (334 aa).

Residues 56–59 (STRT), Gln-83, Arg-107, and 134–137 (HPTQ) each bind carbamoyl phosphate. Residues Asn-168, Asp-232, and 236-237 (SM) contribute to the L-ornithine site. Residues 274–275 (CL) and Arg-320 each bind carbamoyl phosphate.

This sequence belongs to the aspartate/ornithine carbamoyltransferase superfamily. OTCase family.

It localises to the cytoplasm. It carries out the reaction carbamoyl phosphate + L-ornithine = L-citrulline + phosphate + H(+). It participates in amino-acid biosynthesis; L-arginine biosynthesis; L-arginine from L-ornithine and carbamoyl phosphate: step 1/3. Reversibly catalyzes the transfer of the carbamoyl group from carbamoyl phosphate (CP) to the N(epsilon) atom of ornithine (ORN) to produce L-citrulline. This chain is Ornithine carbamoyltransferase, found in Escherichia coli (strain 55989 / EAEC).